A 70-amino-acid chain; its full sequence is uncharacterized protein (70 aa).

Residues 5–59 (IREFRAKYGMTQEELAKKVGVRRETIVFLEKGKYNPSLRLAYKIARVFNARIEDL) enclose the HTH cro/C1-type domain. Positions 16 to 35 (QEELAKKVGVRRETIVFLEK) form a DNA-binding region, H-T-H motif.

This is an uncharacterized protein from Archaeoglobus fulgidus (strain ATCC 49558 / DSM 4304 / JCM 9628 / NBRC 100126 / VC-16).